Here is a 329-residue protein sequence, read N- to C-terminus: uncharacterized protein (329 aa).

The SIS domain occupies 38–184 (IVKLILKSQE…MACLMRAKNF (147 aa)). 56 to 61 (GVGKSA) contributes to the ATP binding site. CBS domains are found at residues 211–267 (QTTN…GLSL) and 276–329 (TLKP…GLKA).

The protein belongs to the SIS family. GutQ/KpsF subfamily.

This is an uncharacterized protein from Helicobacter pylori (strain J99 / ATCC 700824) (Campylobacter pylori J99).